The primary structure comprises 176 residues: Parathyroid hormone-related protein (176 aa).

Positions 1–25 (MMFTKLFQQWSFAVFLLSYSVPSYG) are cleaved as a signal peptide. Residues 26-37 (RSVEGISRRLKR) constitute a propeptide that is removed on maturation. The tract at residues 58–69 (RIFLQNLIEGVN) is important for receptor binding. Positions 76–157 (TSEVSPNPKP…WLNSGMYGSN (82 aa)) are disordered. Polar residues-rich tracts occupy residues 77–91 (SEVS…NTKN) and 106–116 (TQETNKSQTYK). The Nuclear localization signal signature appears at 109 to 130 (TNKSQTYKEQPLKVSGKKKKAK). A compositionally biased stretch (basic residues) spans 123–133 (SGKKKKAKPGK).

Belongs to the parathyroid hormone family.

It is found in the secreted. The protein resides in the cytoplasm. Its subcellular location is the nucleus. Functionally, neuroendocrine peptide which is a critical regulator of cellular and organ growth, development, migration, differentiation and survival and of epithelial calcium ion transport. Acts by binding to its receptor, PTH1R, activating G protein-coupled receptor signaling. Regulates endochondral bone development and epithelial-mesenchymal interactions during the formation of the mammary glands and teeth. Required for skeletal homeostasis. Potent inhibitor of osteoclastic bone resorption. In Gallus gallus (Chicken), this protein is Parathyroid hormone-related protein (PTHLH).